A 637-amino-acid polypeptide reads, in one-letter code: Probable membrane transporter protein MamO (637 aa).

Over 1–24 (MIEVGETMGELPTNKIVFCERSWK) the chain is Cytoplasmic. The helical transmembrane segment at 25 to 45 (TPVSILAFLIFVTFAWGIYLL) threads the bilayer. At 46–352 (DHYDEDDNFH…AKIGGYSVAD (307 aa)) the chain is on the lumenal side. The protease-like stretch occupies residues 78–268 (LYHTVPPAVV…VIVSHLQDVV (191 aa)). A divalent metal cation is bound by residues H148 and H263. A helical membrane pass occupies residues 353–373 (IVGLVMLALAAGVTGGMMTMG). Residues 370 to 637 (MTMGGGVLQV…AIALKMLTSV (268 aa)) form a TSUP-like region. Residues 374–378 (GGVLQ) are Cytoplasmic-facing. Residues 379–399 (VAGMMVFFGYGMYLIRPVVFL) form a helical membrane-spanning segment. Topologically, residues 400-416 (TNVVVYGAASLRNDKAQ) are lumenal. The helical transmembrane segment at 417-437 (LVQWDKVKPLIPWGIAGVILG) threads the bilayer. Position 438 (Y438) is a topological domain, cytoplasmic. A helical transmembrane segment spans residues 439–459 (FIGNAIGDSVVGILLGLFALI). Over 460–517 (MAGKAVMEILQPNAGEETAESISATEAEDEMDELMALADGTSRPKASGLALPEGHARS) the chain is Lumenal. The helical transmembrane segment at 518–538 (AVLGLPMGLFSGILGISGGVI) threads the bilayer. The Cytoplasmic portion of the chain corresponds to 539-554 (EVPLQRYVGRISLQNA). The chain crosses the membrane as a helical span at residues 555-575 (IANSSVLVFWASVAGSVVAFL). Over 576–586 (HGSSTGLIHWE) the chain is Lumenal. Residues 587–607 (APVTLALVMIPGAYVGGIIGA) form a helical membrane-spanning segment. Residues 608 to 616 (RLMRVLPVR) lie on the Cytoplasmic side of the membrane. The helical transmembrane segment at 617 to 637 (VLKGVYAATMAAIALKMLTSV) threads the bilayer.

It in the N-terminal section; belongs to the peptidase S1C family. In the C-terminal section; belongs to the 4-toluene sulfonate uptake permease (TSUP) (TC 2.A.102) family. It depends on a metal cation as a cofactor. In terms of processing, subject to proteolytic cleavage by MamE.

It localises to the magnetosome membrane. Plays 2 roles; promotes magnetite nucleation/formation and activates the MamE protease. Despite its near conservation of a protease-like sequence, this is probably not a protease. Required in conjunction with MamP for proteolysis of at least MamE, itself and MamP. May transport a solute that controls MamE's protease activity. May place individual iron atoms into the magnetite lattice. The chain is Probable membrane transporter protein MamO (mamO) from Paramagnetospirillum magneticum (strain ATCC 700264 / AMB-1) (Magnetospirillum magneticum).